We begin with the raw amino-acid sequence, 323 residues long: Beta-ketoacyl-[acyl-carrier-protein] synthase III (323 aa).

Active-site residues include C114 and H250. The interval 251–255 (QANLR) is ACP-binding. The active site involves N280.

Belongs to the thiolase-like superfamily. FabH family. In terms of assembly, homodimer.

It localises to the cytoplasm. The enzyme catalyses malonyl-[ACP] + acetyl-CoA + H(+) = 3-oxobutanoyl-[ACP] + CO2 + CoA. Its pathway is lipid metabolism; fatty acid biosynthesis. Functionally, catalyzes the condensation reaction of fatty acid synthesis by the addition to an acyl acceptor of two carbons from malonyl-ACP. Catalyzes the first condensation reaction which initiates fatty acid synthesis and may therefore play a role in governing the total rate of fatty acid production. Possesses both acetoacetyl-ACP synthase and acetyl transacylase activities. Its substrate specificity determines the biosynthesis of branched-chain and/or straight-chain of fatty acids. This chain is Beta-ketoacyl-[acyl-carrier-protein] synthase III, found in Cereibacter sphaeroides (strain ATCC 17025 / ATH 2.4.3) (Rhodobacter sphaeroides).